The primary structure comprises 748 residues: Transducin-like enhancer protein 4 (748 aa).

Disordered regions lie at residues 1–20 and 157–332; these read MIRD…PHQP and LPIK…DPLA. The tract at residues 1–112 is q domain; that stretch reads MIRDLSKMYR…SQEQQQLQAQ (112 aa). The GP domain stretch occupies residues 113–179; that stretch reads HLLTWTWSAC…HQRDRDSIKS (67 aa). Over residues 158-177 the composition is skewed to basic and acidic residues; the sequence is PIKDEKKHHDNDHQRDRDSI. Positions 178–189 are enriched in low complexity; it reads KSSSVSPSASFR. The tract at residues 180-249 is ccN domain; sequence SSVSPSASFR…SPRGSPAHSP (70 aa). Residues serine 183, serine 187, serine 191, and serine 197 each carry the phosphoserine modification. A compositionally biased stretch (basic and acidic residues) spans 190 to 227; that stretch reads GSEKHRNSTDYSSESKKQKTEEKEIAARYDSDGEKSDD. Residue lysine 212 is modified to N6-acetyllysine. Phosphoserine is present on serine 220. Serine 225 is modified (phosphoserine; by CK2). Phosphoserine; by CDK1 is present on serine 240. Phosphoserine is present on residues serine 244 and serine 248. The segment covering 248–264 has biased composition (basic and acidic residues); it reads SPRENGLDKTRLLKKDA. The segment at 250–427 is SP domain; sequence RENGLDKTRL…PGGKPAYSFH (178 aa). N6-acetyllysine is present on lysine 256. The segment covering 265–280 has biased composition (low complexity); sequence PISPASVASSSSTPSS. The residue at position 267 (serine 267) is a Phosphoserine. The span at 292–303 shows a compositional bias: polar residues; it reads TTPVSKSNTPTP. Threonine 293 is subject to Phosphothreonine. A phosphoserine mark is found at serine 296 and serine 298. Phosphothreonine is present on residues threonine 300, threonine 302, threonine 309, and threonine 315. At serine 394 the chain carries Phosphoserine. WD repeat units lie at residues 460 to 498, 506 to 545, 550 to 589, 592 to 631, 633 to 672, 674 to 713, and 715 to 748; these read NHGE…NKSP, NRDN…PRIK, SSAP…LVRQ, GHTD…QLQQ, DFTS…KYQL, LHES…SIFQ, and KESS…EVIY.

Belongs to the WD repeat Groucho/TLE family. In terms of assembly, homooligomer and heterooligomer with other family members. Binds PAX5, LEF1, TCF7, TCF7L1 and TCF7L2. Interacts with ZNF703; TLE4 may mediate ZNF703 transcriptional repression. Interacts with SIX3 and SIX6. Interacts with PAX2. In terms of processing, phosphorylated. PAX5 binding increases phosphorylation. Ubiquitinated by XIAP/BIRC4.

The protein localises to the nucleus. Its function is as follows. Transcriptional corepressor that binds to a number of transcription factors. Inhibits the transcriptional activation mediated by PAX5, and by CTNNB1 and TCF family members in Wnt signaling. The effects of full-length TLE family members may be modulated by association with dominant-negative AES. Essential for the transcriptional repressor activity of SIX3 during retina and lens development and for SIX3 transcriptional auto-repression. Involved in transcriptional repression of GNRHR and enhances MSX1-mediated transcriptional repression of CGA/alpha-GSU. The chain is Transducin-like enhancer protein 4 (Tle4) from Rattus norvegicus (Rat).